The following is a 155-amino-acid chain: Small ribosomal subunit protein uS9 (155 aa).

Belongs to the universal ribosomal protein uS9 family.

The chain is Small ribosomal subunit protein uS9 from Rhizobium etli (strain ATCC 51251 / DSM 11541 / JCM 21823 / NBRC 15573 / CFN 42).